Reading from the N-terminus, the 38-residue chain is Large ribosomal subunit protein bL36 (38 aa).

This sequence belongs to the bacterial ribosomal protein bL36 family.

The polypeptide is Large ribosomal subunit protein bL36 (Lactobacillus johnsonii (strain CNCM I-12250 / La1 / NCC 533)).